The sequence spans 286 residues: Undecaprenyl-diphosphatase (286 aa).

7 consecutive transmembrane segments (helical) span residues 43–63 (FWKMFSIVIQLGAILCLPIYF), 91–111 (LTIIAFLCTAIPAFLFTKIIG), 118–138 (IIMGSALLIGGIVMWIVDVMF), 150–170 (MSVGQAIWIGLCQVLSAVFPG), 189–209 (AAALEFSFFLSIPTMVVATCY), 236–256 (ITLAIGFIVSFIVAYFVVAWF), and 264–284 (GFVPFAVYRIVVGIAVLAWAL).

This sequence belongs to the UppP family.

The protein resides in the cell inner membrane. The enzyme catalyses di-trans,octa-cis-undecaprenyl diphosphate + H2O = di-trans,octa-cis-undecaprenyl phosphate + phosphate + H(+). Catalyzes the dephosphorylation of undecaprenyl diphosphate (UPP). Confers resistance to bacitracin. This is Undecaprenyl-diphosphatase from Koribacter versatilis (strain Ellin345).